A 416-amino-acid chain; its full sequence is Pentraxin fusion protein (416 aa).

The N-terminal stretch at 1-14 is a signal peptide; that stretch reads MKSLLLFLKSQVFG. Asn129 is a glycosylation site (N-linked (GlcNAc...) asparagine). The tract at residues 184 to 206 is disordered; it reads GTEASDSSESVDGTEAPASPESD. In terms of domain architecture, Pentraxin (PTX) spans 220–416; the sequence is TNKSFMFPKE…YSMIGNVAEV (197 aa). A glycan (N-linked (GlcNAc...) asparagine) is linked at Asn221. A disulfide bridge connects residues Cys251 and Cys311. The Ca(2+) site is built by Asp275, Gln353, Asp354, and Gln364.

It depends on Ca(2+) as a cofactor.

The protein is Pentraxin fusion protein (pxn1) of Xenopus laevis (African clawed frog).